A 66-amino-acid polypeptide reads, in one-letter code: uncharacterized protein (66 aa).

The tract at residues 1–21 (MPGGDRTGPWGQGPRTGRRAG) is disordered.

This is an uncharacterized protein from Archaeoglobus fulgidus (strain ATCC 49558 / DSM 4304 / JCM 9628 / NBRC 100126 / VC-16).